The sequence spans 562 residues: Protein FAM83D-A (562 aa).

The disordered stretch occupies residues 424–471 (ITTQTTETSQCTTQTPAPTSSVARLSNSSNSSSSSFSSTSITSTGSNC). Residues 425-471 (TTQTTETSQCTTQTPAPTSSVARLSNSSNSSSSSFSSTSITSTGSNC) show a composition bias toward low complexity.

It belongs to the FAM83 family.

The protein localises to the cytoplasm. It localises to the cytoskeleton. The protein resides in the spindle. Its subcellular location is the spindle pole. Functionally, may regulate cell proliferation, growth, migration and epithelial to mesenchymal transition. May also be important for proper chromosome congression and alignment during mitosis. The polypeptide is Protein FAM83D-A (Xenopus laevis (African clawed frog)).